The following is a 128-amino-acid chain: MYDNLKSLGITNPEEIDRYSLRQEANNDILKIYFQKDRGEFFAKSVKFKYPRQRKTVVADGIGQGYKEVQEISPNLRYVIDELDQICQRDRTEVDLKRKILDDLRHLESVVANKINEIEADLEKLTRK.

The protein belongs to the UPF0325 family.

The protein is UPF0325 protein CKO_03204 of Citrobacter koseri (strain ATCC BAA-895 / CDC 4225-83 / SGSC4696).